We begin with the raw amino-acid sequence, 308 residues long: MLTVQELVDDNADNIPFNWIAGHGAAERNIRDDGMAAADLVGHLNLIHPSRIQVFGQEELAYYSRFDLRRRTHHMDELLIGGVPAILLADGLSPPQDLIDQCDQHQVPLLSTPVAAAQLIDLLRIYLGKKLAPTTTVHGVFMDVLGLGVLITGESGLGKSELALELISRGHGLVADDAVEFSRIAPGMIEGHCPPLLQNMLEVRGLGLLDIRTIFGETSVRRKMRLKLIVHLVRATAQDKFERLPLQDITQDMLGMPVRKVMLQVAAGRNLAVLVEAAVRNTILKLRGIDTLGEFMERQAMAILQSSK.

Active-site residues include His-138 and Lys-159. 153–160 (GESGLGKS) contributes to the ATP binding site. A Mg(2+)-binding site is contributed by Ser-160. The active-site Proton acceptor; for phosphorylation activity. Proton donor; for dephosphorylation activity is the Asp-177. An important for the catalytic mechanism of both phosphorylation and dephosphorylation region spans residues 201-210 (LEVRGLGLLD). Position 202 (Glu-202) interacts with Mg(2+). Arg-243 is an active-site residue. The important for the catalytic mechanism of dephosphorylation stretch occupies residues 264–269 (QVAAGR).

It belongs to the HPrK/P family. Homohexamer. Mg(2+) serves as cofactor.

It carries out the reaction [HPr protein]-L-serine + ATP = [HPr protein]-O-phospho-L-serine + ADP + H(+). The enzyme catalyses [HPr protein]-O-phospho-L-serine + phosphate + H(+) = [HPr protein]-L-serine + diphosphate. Functionally, catalyzes the ATP- as well as the pyrophosphate-dependent phosphorylation of a specific serine residue in HPr, a phosphocarrier protein of the phosphoenolpyruvate-dependent sugar phosphotransferase system (PTS). HprK/P also catalyzes the pyrophosphate-producing, inorganic phosphate-dependent dephosphorylation (phosphorolysis) of seryl-phosphorylated HPr (P-Ser-HPr). The sequence is that of HPr kinase/phosphorylase from Bordetella petrii (strain ATCC BAA-461 / DSM 12804 / CCUG 43448).